Reading from the N-terminus, the 723-residue chain is Catalase-peroxidase (723 aa).

An N-terminal signal peptide occupies residues 1–29 (MDGNDLVENKCPVMHGGITVAGHSNTAWW). Residues 97-225 (WHSAGSYRLA…LAAVQMGLIY (129 aa)) constitute a cross-link (tryptophyl-tyrosyl-methioninium (Trp-Tyr) (with M-251)). H98 (proton acceptor) is an active-site residue. A cross-link (tryptophyl-tyrosyl-methioninium (Tyr-Met) (with W-97)) is located at residues 225-251 (YVNPEGVNGKSDPLKSAAQVRETFARM). H266 contributes to the heme b binding site.

Belongs to the peroxidase family. Peroxidase/catalase subfamily. Homodimer or homotetramer. Heme b serves as cofactor. Formation of the three residue Trp-Tyr-Met cross-link is important for the catalase, but not the peroxidase activity of the enzyme.

It carries out the reaction H2O2 + AH2 = A + 2 H2O. The enzyme catalyses 2 H2O2 = O2 + 2 H2O. Bifunctional enzyme with both catalase and broad-spectrum peroxidase activity. The chain is Catalase-peroxidase from Hyphomonas neptunium (strain ATCC 15444).